The sequence spans 521 residues: Ribonuclease Y 1 (521 aa).

Residues 1-21 traverse the membrane as a helical segment; sequence MEIVISAIIGLLIGGTVVFVI. The segment at 51–87 is disordered; it reads IKKESENKAKDFESRARKNVEQDIHKQKSTLKNKESQ. The KH domain maps to 211-271; that stretch reads TVSVLALPND…VRRELARRTI (61 aa). The 94-residue stretch at 337–430 folds into the HD domain; it reads ALNQSLEVAT…VHAAYTLSSS (94 aa).

This sequence belongs to the RNase Y family.

It is found in the cell membrane. Endoribonuclease that initiates mRNA decay. In Bdellovibrio bacteriovorus (strain ATCC 15356 / DSM 50701 / NCIMB 9529 / HD100), this protein is Ribonuclease Y 1.